Reading from the N-terminus, the 266-residue chain is Indole-3-glycerol phosphate synthase (266 aa).

This sequence belongs to the TrpC family.

The catalysed reaction is 1-(2-carboxyphenylamino)-1-deoxy-D-ribulose 5-phosphate + H(+) = (1S,2R)-1-C-(indol-3-yl)glycerol 3-phosphate + CO2 + H2O. Its pathway is amino-acid biosynthesis; L-tryptophan biosynthesis; L-tryptophan from chorismate: step 4/5. The sequence is that of Indole-3-glycerol phosphate synthase from Herminiimonas arsenicoxydans.